The following is a 499-amino-acid chain: Tektin-like protein 1 (499 aa).

Coiled coils occupy residues 197-227 (SMLT…LKTL) and 297-317 (LNEA…MAKN). Tyr372 bears the Phosphotyrosine mark.

Microtubule inner protein component of sperm flagellar doublet microtubules.

Its subcellular location is the cytoplasm. The protein resides in the cytoskeleton. The protein localises to the flagellum axoneme. In terms of biological role, microtubule inner protein (MIP) part of the dynein-decorated doublet microtubules (DMTs) in sperm flagellar axoneme, which is required for motile flagellum beating. Forms an extensive interaction network cross-linking the lumen of axonemal doublet microtubules. In Homo sapiens (Human), this protein is Tektin-like protein 1.